The primary structure comprises 463 residues: MVAHRARRRKRASATQLYQTCKQSGTCPEDVINKIEHKTWADKILQWGSLFTFFGGLGIGTGSGTGGRTGYIPLGTRPSTVVDVTPARPPIVVESVGPTDPSIVTLVEESSVIESGASFPNFTGTAGFEVTSSSTTTPAVLDITPTSTSVHVSSTTYTNPTFVDPPVIEVPQTGEVSGNILISTPTSGVHSYEEIPMQTFAVQGTGNEPISSTPIPGLRRIAAPRLYKKAFQQVKVTDPAFLHKPETLINVDNPIFQNADTTLTFSPSGVAPDPDFLDIVALHRPAFTTRRGGVRFSRLGTKATMRTRSGKQIGARVHYYYDVSPITQTEEIEMQPLLSTDNTFDGLYDIYANIDDEAPVSSRFSIATPSRLPTNTVPLSFSGSTSNVTIPFGTSWDVPIYSGPDVVLPTGPPTWPYAPQSPFDTTHDVVIQGSTFALWPVYFLKRRRRKRIPYFLADGGVAA.

A Nuclear localization signal motif is present at residues 1–12 (MVAHRARRRKRA). A disulfide bridge links Cys21 with Cys27. A Nuclear localization signal motif is present at residues 444–452 (LKRRRRKRI).

This sequence belongs to the papillomaviridae L2 protein family. Interacts with major capsid protein L1. Interacts with E2; this interaction inhibits E2 transcriptional activity but not the DNA replication function E2. Interacts with host GADD45GIP1. Interacts with host HSPA8; this interaction is required for L2 nuclear translocation. Interacts with host importins KPNB2 and KPNB3. Forms a complex with importin alpha2-beta1 heterodimers via interaction with the importin alpha2 adapter. Interacts with host DYNLT1; this interaction is essential for virus intracellular transport during entry. Interacts (via C-terminus) with host retromer subunits VPS35 and VPS29. Post-translationally, highly phosphorylated.

It localises to the virion. The protein resides in the host nucleus. The protein localises to the host early endosome. It is found in the host Golgi apparatus. Minor protein of the capsid that localizes along the inner surface of the virion, within the central cavities beneath the L1 pentamers. Plays a role in capsid stabilization through interaction with the major capsid protein L1. Once the virion enters the host cell, L2 escorts the genomic DNA into the nucleus by promoting escape from the endosomal compartments and traffic through the host Golgi network. Mechanistically, the C-terminus of L2 possesses a cell-penetrating peptide that protudes from the host endosome, interacts with host cytoplasmic retromer cargo and thereby mediates the capsid delivery to the host trans-Golgi network. Plays a role through its interaction with host dynein in the intracellular microtubule-dependent transport of viral capsid toward the nucleus. Mediates the viral genome import into the nucleus through binding to host importins. Once within the nucleus, L2 localizes viral genomes to host PML bodies in order to activate early gene expression for establishment of infection. Later on, promotes late gene expression by interacting with the viral E2 protein and by inhibiting its transcriptional activation functions. During virion assembly, encapsidates the genome by direct interaction with the viral DNA. This is Minor capsid protein L2 from Homo sapiens (Human).